Here is a 391-residue protein sequence, read N- to C-terminus: tRNA-specific 2-thiouridylase MnmA (391 aa).

Residues 9 to 16 (GMSGGVDS) and methionine 35 contribute to the ATP site. The tract at residues 95–97 (NPD) is interaction with target base in tRNA. Catalysis depends on cysteine 100, which acts as the Nucleophile. A disulfide bridge connects residues cysteine 100 and cysteine 196. Glycine 124 contacts ATP. Positions 146–148 (KDQ) are interaction with tRNA. The active-site Cysteine persulfide intermediate is the cysteine 196. Positions 308–309 (RY) are interaction with tRNA.

This sequence belongs to the MnmA/TRMU family.

The protein localises to the cytoplasm. It carries out the reaction S-sulfanyl-L-cysteinyl-[protein] + uridine(34) in tRNA + AH2 + ATP = 2-thiouridine(34) in tRNA + L-cysteinyl-[protein] + A + AMP + diphosphate + H(+). Catalyzes the 2-thiolation of uridine at the wobble position (U34) of tRNA, leading to the formation of s(2)U34. This Burkholderia orbicola (strain MC0-3) protein is tRNA-specific 2-thiouridylase MnmA.